The primary structure comprises 334 residues: Cyclin N-terminal domain-containing protein 1 (334 aa).

The 152-residue stretch at 29–180 (NALLHLAQQN…ILKSLNFQIN (152 aa)) folds into the Cyclin N-terminal domain.

As to quaternary structure, interacts with PRR19; this interaction promotes crossover formation. Interacts with RFC3 and RFC4; these interactions facilitate crossover formation. Interacts with CDC34; this interaction regulates the cell-cycle progression. As to expression, isoform 2 is expressed in spermatocyte.

Its subcellular location is the nucleus. It is found in the cytoplasm. The protein localises to the chromosome. Plays a role in the different steps of crossover formation during meiotic recombination. Participates in the crossover differentiation step of crossover-specific recombination intermediates through its interaction with PRR19. In addition, stimulates crossover formation through the interactions with RFC3 and RFC4 and simultaneously regulates cell-cycle progression through interactions with CDC34 and subsequent ubiquitination of WEE1. May also participates in an active deselection process that destabilizes or removes excess pre-CO intermediates. In Mus musculus (Mouse), this protein is Cyclin N-terminal domain-containing protein 1.